A 246-amino-acid polypeptide reads, in one-letter code: Triosephosphate isomerase (246 aa).

9 to 11 contributes to the substrate binding site; the sequence is NWK. The active-site Electrophile is the H95. The Proton acceptor role is filled by E165. Substrate is bound by residues G171, S210, and 231-232; that span reads GG.

Belongs to the triosephosphate isomerase family. As to quaternary structure, homodimer.

It is found in the cytoplasm. It catalyses the reaction D-glyceraldehyde 3-phosphate = dihydroxyacetone phosphate. Its pathway is carbohydrate biosynthesis; gluconeogenesis. It functions in the pathway carbohydrate degradation; glycolysis; D-glyceraldehyde 3-phosphate from glycerone phosphate: step 1/1. Involved in the gluconeogenesis. Catalyzes stereospecifically the conversion of dihydroxyacetone phosphate (DHAP) to D-glyceraldehyde-3-phosphate (G3P). The chain is Triosephosphate isomerase from Thermodesulfovibrio yellowstonii (strain ATCC 51303 / DSM 11347 / YP87).